The sequence spans 466 residues: Cytochrome b561 and DOMON domain-containing protein At3g59070 (466 aa).

The signal sequence occupies residues 1-25; the sequence is MSLSSRATLVVLCCLFMLIPSFTTA. The 116-residue stretch at 57-172 folds into the DOMON domain; sequence LNSYLHFNYA…TVVNHLWQDG (116 aa). The Cytochrome b561 domain occupies 179 to 380; it reads RLGMHAMSGD…MEILQFKKRW (202 aa). 3 helical membrane passes run 219 to 239, 252 to 272, and 287 to 307; these read IHAIVNALSWGILMPIGVMAA, WFYIHVVCQTTGYFSGLIGGL, and TLHTVIGLLLFALGFLQILSL. Positions 220, 256, 289, and 325 each coordinate heme b. A run of 2 helical transmembrane segments spans residues 327 to 347 and 355 to 375; these read TMGYIVIVLSIYNIYKGLSIL and IAYTTIICCIAAFAVVMEILQ.

Heme b is required as a cofactor.

It localises to the membrane. May act as a catecholamine-responsive trans-membrane electron transporter. The polypeptide is Cytochrome b561 and DOMON domain-containing protein At3g59070 (Arabidopsis thaliana (Mouse-ear cress)).